The chain runs to 299 residues: F-actin-capping protein subunit alpha-3 (299 aa).

Phosphoserine is present on residues Ser-2 and Ser-290.

This sequence belongs to the F-actin-capping protein alpha subunit family. As to quaternary structure, component of the F-actin capping complex, composed of a heterodimer of an alpha and a beta subunit. Component of the WASH complex, composed of F-actin-capping protein subunit alpha (CAPZA1, CAPZA2 or CAPZA3), F-actin-capping protein subunit beta (CAPZB), WASHC1, WASHC2, WASHC3, WASHC4 and WASHC5. Exclusively expressed in the testis.

The protein resides in the cytoplasm. It localises to the cytoskeleton. Functionally, F-actin-capping proteins bind in a Ca(2+)-independent manner to the fast growing ends of actin filaments (barbed end) thereby blocking the exchange of subunits at these ends. Unlike other capping proteins (such as gelsolin and severin), these proteins do not sever actin filaments. May play a role in the morphogenesis of spermatid. The chain is F-actin-capping protein subunit alpha-3 (Capza3) from Mus musculus (Mouse).